We begin with the raw amino-acid sequence, 594 residues long: DNA mismatch repair protein MutL (594 aa).

Belongs to the DNA mismatch repair MutL/HexB family.

Functionally, this protein is involved in the repair of mismatches in DNA. It is required for dam-dependent methyl-directed DNA mismatch repair. May act as a 'molecular matchmaker', a protein that promotes the formation of a stable complex between two or more DNA-binding proteins in an ATP-dependent manner without itself being part of a final effector complex. This is DNA mismatch repair protein MutL from Rhizorhabdus wittichii (strain DSM 6014 / CCUG 31198 / JCM 15750 / NBRC 105917 / EY 4224 / RW1) (Sphingomonas wittichii).